A 397-amino-acid chain; its full sequence is Xyloglucan O-acetyltransferase 3 (397 aa).

At 1-3 (MNR) the chain is on the cytoplasmic side. Residues 4-24 (FFYTVGLIFLFSFFILYSPKT) traverse the membrane as a helical; Signal-anchor for type II membrane protein segment. The Lumenal segment spans residues 25–397 (SDLSNNVDLH…RHAFTDFTWS (373 aa)). Disulfide bonds link Cys48-Cys98, Cys69-Cys134, Cys78-Cys370, and Cys293-Cys366. Asn66 is a glycosylation site (N-linked (GlcNAc...) asparagine). Positions 121-123 (GDS) match the GDS motif motif. Ser123 acts as the Nucleophile in catalysis. 3 N-linked (GlcNAc...) asparagine glycosylation sites follow: Asn162, Asn182, and Asn294. The Proton donor role is filled by Asp365. The DXXH motif motif lies at 365–368 (DCVH). The active-site Proton acceptor is His368.

It belongs to the PC-esterase family. TBL subfamily.

Its subcellular location is the golgi apparatus membrane. Its function is as follows. Xyloglucan acetyltransferase that catalyzes the acetylation of fucosylated Gal residues on xyloglucan side chains. Predominantly catalyze 6-O-monoacetylation of Gal residues in the Fuc-Gal-Xyl trisaccharide side chains of xyloglucan oligomers. This chain is Xyloglucan O-acetyltransferase 3, found in Populus trichocarpa (Western balsam poplar).